Reading from the N-terminus, the 248-residue chain is Triosephosphate isomerase (248 aa).

9 to 11 is a binding site for substrate; sequence NWK. H94 (electrophile) is an active-site residue. E166 (proton acceptor) is an active-site residue. Substrate is bound by residues G172, S212, and 233-234; that span reads GG.

The protein belongs to the triosephosphate isomerase family. Homodimer.

It localises to the cytoplasm. It catalyses the reaction D-glyceraldehyde 3-phosphate = dihydroxyacetone phosphate. It functions in the pathway carbohydrate biosynthesis; gluconeogenesis. It participates in carbohydrate degradation; glycolysis; D-glyceraldehyde 3-phosphate from glycerone phosphate: step 1/1. In terms of biological role, involved in the gluconeogenesis. Catalyzes stereospecifically the conversion of dihydroxyacetone phosphate (DHAP) to D-glyceraldehyde-3-phosphate (G3P). This Clostridium botulinum (strain Loch Maree / Type A3) protein is Triosephosphate isomerase.